Consider the following 363-residue polypeptide: Mannose-1-phosphate guanyltransferase (363 aa).

This sequence belongs to the transferase hexapeptide repeat family.

It localises to the cytoplasm. It carries out the reaction alpha-D-mannose 1-phosphate + GTP + H(+) = GDP-alpha-D-mannose + diphosphate. It participates in nucleotide-sugar biosynthesis; GDP-alpha-D-mannose biosynthesis; GDP-alpha-D-mannose from alpha-D-mannose 1-phosphate (GTP route): step 1/1. Functionally, involved in cell wall synthesis where it is required for glycosylation. Involved in cell cycle progression through cell-size checkpoint. Required for the correct assembly of the septum. This Schizosaccharomyces pombe (strain 972 / ATCC 24843) (Fission yeast) protein is Mannose-1-phosphate guanyltransferase (mpg1).